The following is a 33-amino-acid chain: Cytochrome b6-f complex subunit 8 (33 aa).

A helical membrane pass occupies residues 2 to 22 (LFTLAWASLAAVFSFSIAMVV).

The protein belongs to the PetN family. In terms of assembly, the 4 large subunits of the cytochrome b6-f complex are cytochrome b6, subunit IV (17 kDa polypeptide, PetD), cytochrome f and the Rieske protein, while the 4 small subunits are PetG, PetL, PetM and PetN. The complex functions as a dimer.

It is found in the cellular thylakoid membrane. Component of the cytochrome b6-f complex, which mediates electron transfer between photosystem II (PSII) and photosystem I (PSI), cyclic electron flow around PSI, and state transitions. The polypeptide is Cytochrome b6-f complex subunit 8 (Prochlorococcus marinus (strain MIT 9303)).